A 104-amino-acid polypeptide reads, in one-letter code: Protein EPIDERMAL PATTERNING FACTOR 1 (104 aa).

Positions Met-1–Ala-20 are cleaved as a signal peptide. 4 cysteine pairs are disulfide-bonded: Cys-60–Cys-94, Cys-64–Cys-70, Cys-67–Cys-96, and Cys-79–Cys-88. Residue Asn-98 is glycosylated (N-linked (GlcNAc...) asparagine).

This sequence belongs to the plant cysteine rich small secretory peptide family. Epidermal patterning factor subfamily. Interacts with ERECTA and ERL1, but not with TMM. As to expression, expressed in shoots, but not in roots. Mostly localized in developing leaves, specifically in meristemoids, guard mother cells (GMCs), and young guard cells.

The protein localises to the secreted. Functionally, controls stomatal patterning. Regulates asymmetric cell division during guard cell differentiation. Mediates stomatal development inhibition. Not cleaved by the protease CRSP (AC Q9LNU1). MEPF1: mobile signal controlling stomatal development in a non-cell-autonomous manner. Uses ERL1 as major receptor. May act by competing with somatogen (AC Q9SV72) for the same receptor, TMM (AC Q9SSD1). The chain is Protein EPIDERMAL PATTERNING FACTOR 1 from Arabidopsis thaliana (Mouse-ear cress).